Reading from the N-terminus, the 384-residue chain is Flap endonuclease 1 (384 aa).

The tract at residues Met-1–Arg-105 is N-domain. Asp-34 lines the Mg(2+) pocket. Arg-47 and Arg-71 together coordinate DNA. Positions 87, 159, 161, 180, and 182 each coordinate Mg(2+). An I-domain region spans residues Asp-123 to His-254. Glu-159 serves as a coordination point for DNA. Residues Gly-232 and Asp-234 each coordinate DNA. Asp-234 contributes to the Mg(2+) binding site. The segment at Ile-341 to Phe-349 is interaction with PCNA. Positions Lys-354 to Arg-384 are disordered. Basic and acidic residues predominate over residues Gly-362–Gly-375.

It belongs to the XPG/RAD2 endonuclease family. FEN1 subfamily. Interacts with PCNA. Three molecules of FEN1 bind to one PCNA trimer with each molecule binding to one PCNA monomer. PCNA stimulates the nuclease activity without altering cleavage specificity. Requires Mg(2+) as cofactor. Phosphorylated. Phosphorylation upon DNA damage induces relocalization to the nuclear plasma.

Its subcellular location is the nucleus. It localises to the nucleolus. The protein resides in the nucleoplasm. It is found in the mitochondrion. Its function is as follows. Structure-specific nuclease with 5'-flap endonuclease and 5'-3' exonuclease activities involved in DNA replication and repair. During DNA replication, cleaves the 5'-overhanging flap structure that is generated by displacement synthesis when DNA polymerase encounters the 5'-end of a downstream Okazaki fragment. It enters the flap from the 5'-end and then tracks to cleave the flap base, leaving a nick for ligation. Also involved in the long patch base excision repair (LP-BER) pathway, by cleaving within the apurinic/apyrimidinic (AP) site-terminated flap. Acts as a genome stabilization factor that prevents flaps from equilibrating into structures that lead to duplications and deletions. Also possesses 5'-3' exonuclease activity on nicked or gapped double-stranded DNA, and exhibits RNase H activity. Also involved in replication and repair of rDNA and in repairing mitochondrial DNA. The sequence is that of Flap endonuclease 1 from Lodderomyces elongisporus (strain ATCC 11503 / CBS 2605 / JCM 1781 / NBRC 1676 / NRRL YB-4239) (Yeast).